We begin with the raw amino-acid sequence, 435 residues long: Xylose isomerase (435 aa).

Catalysis depends on residues H100 and D103. Mg(2+) is bound by residues E231, E267, H270, D295, D306, D308, and D338.

It belongs to the xylose isomerase family. As to quaternary structure, homotetramer. Mg(2+) serves as cofactor.

It is found in the cytoplasm. It catalyses the reaction alpha-D-xylose = alpha-D-xylulofuranose. The protein is Xylose isomerase of Brucella canis (strain ATCC 23365 / NCTC 10854 / RM-666).